Consider the following 461-residue polypeptide: tRNA-splicing endonuclease subunit Sen2 (461 aa).

2 disordered regions span residues 140 to 176 and 190 to 210; these read GAEQ…TSSP and GDPA…DVKE. A compositionally biased stretch (polar residues) spans 144 to 176; the sequence is TGDSCDTVCPNTENTELSGQSSTDTGNIATSSP. Basic and acidic residues predominate over residues 201 to 210; it reads KEQEPADVKE. Catalysis depends on residues Tyr-365, His-373, and Lys-412.

It belongs to the tRNA-intron endonuclease family. TRNA splicing endonuclease is a heterotetramer composed of SEN2, SEN15, SEN34/LENG5 and SEN54.

It localises to the nucleus. The catalysed reaction is pretRNA = a 3'-half-tRNA molecule with a 5'-OH end + a 5'-half-tRNA molecule with a 2',3'-cyclic phosphate end + an intron with a 2',3'-cyclic phosphate and a 5'-hydroxyl terminus.. Its function is as follows. Constitutes one of the two catalytic subunit of the tRNA-splicing endonuclease complex, a complex responsible for identification and cleavage of the splice sites in pre-tRNA. It cleaves pre-tRNA at the 5'- and 3'-splice sites to release the intron. The products are an intron and two tRNA half-molecules bearing 2',3'-cyclic phosphate and 5'-OH termini. There are no conserved sequences at the splice sites, but the intron is invariably located at the same site in the gene, placing the splice sites an invariant distance from the constant structural features of the tRNA body. Probably carries the active site for 5'-splice site cleavage. The tRNA splicing endonuclease is also involved in mRNA processing via its association with pre-mRNA 3'-end processing factors, establishing a link between pre-tRNA splicing and pre-mRNA 3'-end formation, suggesting that the endonuclease subunits function in multiple RNA-processing events. In Gallus gallus (Chicken), this protein is tRNA-splicing endonuclease subunit Sen2 (TSEN2).